The chain runs to 827 residues: Glycerol-3-phosphate acyltransferase (827 aa).

The HXXXXD motif motif lies at 325-330 (CHRSHM).

This sequence belongs to the GPAT/DAPAT family.

The protein resides in the cell inner membrane. It carries out the reaction sn-glycerol 3-phosphate + an acyl-CoA = a 1-acyl-sn-glycero-3-phosphate + CoA. Its pathway is phospholipid metabolism; CDP-diacylglycerol biosynthesis; CDP-diacylglycerol from sn-glycerol 3-phosphate: step 1/3. The polypeptide is Glycerol-3-phosphate acyltransferase (Shigella sonnei (strain Ss046)).